The chain runs to 291 residues: tRNA-cytidine(32) 2-sulfurtransferase (291 aa).

The short motif at 36 to 41 (SGGKDS) is the PP-loop motif element. [4Fe-4S] cluster contacts are provided by cysteine 111, cysteine 114, and cysteine 202. A disordered region spans residues 259-291 (DPWLDAEDEEAEDCGEPSAGDGVVSLGGARGGR). A compositionally biased stretch (acidic residues) spans 262 to 273 (LDAEDEEAEDCG).

The protein belongs to the TtcA family. As to quaternary structure, homodimer. Mg(2+) is required as a cofactor. The cofactor is [4Fe-4S] cluster.

It is found in the cytoplasm. It catalyses the reaction cytidine(32) in tRNA + S-sulfanyl-L-cysteinyl-[cysteine desulfurase] + AH2 + ATP = 2-thiocytidine(32) in tRNA + L-cysteinyl-[cysteine desulfurase] + A + AMP + diphosphate + H(+). The protein operates within tRNA modification. Its function is as follows. Catalyzes the ATP-dependent 2-thiolation of cytidine in position 32 of tRNA, to form 2-thiocytidine (s(2)C32). The sulfur atoms are provided by the cysteine/cysteine desulfurase (IscS) system. The protein is tRNA-cytidine(32) 2-sulfurtransferase of Anaeromyxobacter sp. (strain K).